Consider the following 383-residue polypeptide: S-adenosylmethionine synthase (383 aa).

ATP is bound at residue histidine 15. A Mg(2+)-binding site is contributed by aspartate 17. Residue glutamate 43 coordinates K(+). Residues glutamate 56 and glutamine 99 each contribute to the L-methionine site. Positions 99 to 109 are flexible loop; it reads QSPDINQGVDK. ATP is bound by residues 164-166, 230-231, aspartate 239, 245-246, alanine 262, and lysine 266; these read DAK, RF, and RK. Aspartate 239 is a binding site for L-methionine. Lysine 270 lines the L-methionine pocket.

It belongs to the AdoMet synthase family. In terms of assembly, homotetramer; dimer of dimers. Mg(2+) is required as a cofactor. Requires K(+) as cofactor.

It is found in the cytoplasm. The enzyme catalyses L-methionine + ATP + H2O = S-adenosyl-L-methionine + phosphate + diphosphate. It functions in the pathway amino-acid biosynthesis; S-adenosyl-L-methionine biosynthesis; S-adenosyl-L-methionine from L-methionine: step 1/1. In terms of biological role, catalyzes the formation of S-adenosylmethionine (AdoMet) from methionine and ATP. The overall synthetic reaction is composed of two sequential steps, AdoMet formation and the subsequent tripolyphosphate hydrolysis which occurs prior to release of AdoMet from the enzyme. This chain is S-adenosylmethionine synthase, found in Vibrio atlanticus (strain LGP32) (Vibrio splendidus (strain Mel32)).